A 150-amino-acid chain; its full sequence is Large ribosomal subunit protein uL13 (150 aa).

A disordered region spans residues 130–150; that stretch reads EHPHSAQNPQVLSITTNELVK. Residues 134-150 are compositionally biased toward polar residues; sequence SAQNPQVLSITTNELVK.

Belongs to the universal ribosomal protein uL13 family. As to quaternary structure, part of the 50S ribosomal subunit.

This protein is one of the early assembly proteins of the 50S ribosomal subunit, although it is not seen to bind rRNA by itself. It is important during the early stages of 50S assembly. The polypeptide is Large ribosomal subunit protein uL13 (Prochlorococcus marinus (strain SARG / CCMP1375 / SS120)).